Consider the following 474-residue polypeptide: MSGDVPAAVLPRLVISAPTSGAGKTTVATGLMAALRAAGYDVSGHKAGPDYIDPGYHSLATGRPGRNLDVHLHGENLLGPLLLHGASHPRPADLAVIEGMMGLYDGKLGGRGFASTAHVAALLDAPVVLVVDVSHVSRSAAAIVAGMAVFDQRIRIAGVILNRVGSRRHAAEVASAVEDVGVPVLGALRHDSGLAVPSRHLGLVPAEERAEAVAAVELLAERIAAQVDLTAVVEVARSAPPLHAQAWSAQEALRAAGFHPVSAQRDHPVVAVAGGQAFTFRYAEVEELLRAAGCRPVVFDPMSDPALPDGTAGIYLGGGFPEVYAAELAGNTALRTALRDAVRSGVPTVAECAGLLYLCRDVDGAPMVGALDAVGRMTSRLALGYYSALAPAETLVAAEGDRVPGHTFHRTTVTSTGEQAGPAWLLDGQPDGFSSDPAGIGRPTLHASYLHTHWAGCPQAAARFAAAVSTQRPC.

The 191-residue stretch at 269–459 folds into the GATase cobBQ-type domain; the sequence is VVAVAGGQAF…LHTHWAGCPQ (191 aa). The active-site Nucleophile is the C352.

It belongs to the CobB/CbiA family. Requires Mg(2+) as cofactor.

It catalyses the reaction hydrogenobyrinate + 2 L-glutamine + 2 ATP + 2 H2O = hydrogenobyrinate a,c-diamide + 2 L-glutamate + 2 ADP + 2 phosphate + 2 H(+). The protein operates within cofactor biosynthesis; adenosylcobalamin biosynthesis; cob(II)yrinate a,c-diamide from precorrin-2 (aerobic route): step 9/10. Functionally, catalyzes the ATP-dependent amidation of the two carboxylate groups at positions a and c of hydrogenobyrinate, using either L-glutamine or ammonia as the nitrogen source. This Thermobifida fusca (strain YX) protein is Hydrogenobyrinate a,c-diamide synthase.